The chain runs to 957 residues: ADAMTS-like protein 2 (957 aa).

An N-terminal signal peptide occupies residues 1–29; the sequence is MDGRRQHPHWAWSLLAVAVVAGGAAPTEA. In terms of domain architecture, TSP type-1 1 spans 47–106; that stretch reads AYWWGEWTKWTACSRSCGGGVTSQERHCLQQRRKSVPGTGNRTCVGTSKRYQLCRVQECP. 3 disulfide bridges follow: C59-C100, C63-C105, and C74-C90. N87, N374, N435, N482, N518, N530, N539, and N550 each carry an N-linked (GlcNAc...) asparagine glycan. The span at 532-544 shows a compositional bias: polar residues; it reads SSEAPFPNTSASP. The tract at residues 532 to 568 is disordered; the sequence is SSEAPFPNTSASPPNLAGNRTHKARTRPKARKQGVSP. Residues 551 to 563 are compositionally biased toward basic residues; the sequence is RTHKARTRPKARK. 6 consecutive TSP type-1 domains span residues 570 to 624, 628 to 692, 694 to 742, 743 to 801, 803 to 857, and 859 to 914; these read DMYR…EFCA, CQPR…PACG, QWEM…TGPP, CDRQ…KNCP, HWLA…TCFE, and PCFK…QPCP. Residue N737 is glycosylated (N-linked (GlcNAc...) asparagine). An N-linked (GlcNAc...) asparagine glycan is attached at N813. In terms of domain architecture, PLAC spans 918-956; it reads PDDSCQDQPGTNCALAIKVNLCGHWYYSKACCRSCRPPH.

As to quaternary structure, interacts with LTBP1. In terms of processing, glycosylated. Can be O-fucosylated by POFUT2 on a serine or a threonine residue found within the consensus sequence C1-X(2)-(S/T)-C2-G of the TSP type-1 repeat domains where C1 and C2 are the first and second cysteine residue of the repeat, respectively. Fucosylated repeats can then be further glycosylated by the addition of a beta-1,3-glucose residue by the glucosyltransferase, B3GALTL. Fucosylation mediates the efficient secretion of ADAMTS family members. Can also be C-glycosylated with one or two mannose molecules on tryptophan residues within the consensus sequence W-X-X-W of the TPRs, and N-glycosylated. These other glycosylations can also facilitate secretion.

It is found in the secreted. In Mus musculus (Mouse), this protein is ADAMTS-like protein 2 (Adamtsl2).